The sequence spans 128 residues: Gene 64 protein (128 aa).

This is Gene 64 protein (64) from Mycobacterium phage L5 (Mycobacteriophage L5).